A 760-amino-acid chain; its full sequence is Leucine-rich repeat extensin-like protein 3 (760 aa).

Residues 1–20 (MKKTIQILLFFFFLINLTNA) form the signal peptide. N-linked (GlcNAc...) asparagine glycosylation is present at asparagine 16. The LRR 1 repeat unit spans residues 21–45 (LSISSDGGVLSDNEVRHIQRRQLLE). N-linked (GlcNAc...) asparagine glycosylation is found at asparagine 86 and asparagine 98. LRR repeat units lie at residues 113-137 (IRTV…LGLL), 138-160 (SDLA…RFNR), 161-185 (LKLL…VLQL), 186-209 (PSLK…LFSK), 211-232 (LDAI…FGDS), 234-255 (VSVI…LVEM), 256-279 (KNLN…IGRL), 281-303 (NVTV…VGEM), and 304-327 (VSVE…ICQL). The N-linked (GlcNAc...) asparagine glycan is linked to asparagine 281. Asparagine 332 carries an N-linked (GlcNAc...) asparagine glycan. Disordered regions lie at residues 389–502 (GRSV…PPPP), 515–610 (PPVY…YSPP), and 663–748 (PPPP…PVIG). Pro residues-rich tracts occupy residues 394-415 (PRPP…PPAP) and 423-502 (LTSP…PPPP). The segment at 409–758 (SPPPPAPIFS…VSYASPPPPP (350 aa)) is contains the Ser-Pro(4) repeats. The segment covering 663-745 (PPPPVHYSSP…SPEYEGPLPP (83 aa)) has biased composition (pro residues).

As to quaternary structure, interacts with SH3P1. Hydroxylated on proline residues in the S-P-P-P-P repeat. In terms of processing, O-glycosylated on hydroxyprolines. In terms of tissue distribution, expressed in roots, stems, leaves and flowers, mostly in vascular tissues.

It localises to the secreted. It is found in the cell wall. Modulates cell morphogenesis by regulating cell wall formation and assembly, and/or growth polarization. This is Leucine-rich repeat extensin-like protein 3 (LRX3) from Arabidopsis thaliana (Mouse-ear cress).